The primary structure comprises 305 residues: Peroxidase A2 (305 aa).

Glutamine 1 carries the post-translational modification Pyrrolidone carboxylic acid. N-linked (GlcNAc...) asparagine glycosylation is found at asparagine 3 and asparagine 13. Intrachain disulfides connect cysteine 11/cysteine 91, cysteine 44/cysteine 49, cysteine 97/cysteine 299, and cysteine 176/cysteine 208. Catalysis depends on histidine 42, which acts as the Proton acceptor. Ca(2+) is bound by residues aspartate 43, valine 46, glycine 48, aspartate 50, and serine 52. Position 139 (proline 139) interacts with substrate. Residue asparagine 147 is glycosylated (N-linked (GlcNAc...) asparagine). Histidine 169 contributes to the heme b binding site. Threonine 170 contributes to the Ca(2+) binding site. Asparagine 185, asparagine 197, and asparagine 211 each carry an N-linked (GlcNAc...) asparagine glycan. Residues aspartate 221, threonine 224, and aspartate 229 each coordinate Ca(2+). The N-linked (GlcNAc...) asparagine glycan is linked to asparagine 267.

The protein belongs to the peroxidase family. Classical plant (class III) peroxidase subfamily. Ca(2+) is required as a cofactor. It depends on heme b as a cofactor.

The catalysed reaction is 2 a phenolic donor + H2O2 = 2 a phenolic radical donor + 2 H2O. Its function is as follows. Removal of H(2)O(2), oxidation of toxic reductants, biosynthesis and degradation of lignin, suberization, auxin catabolism, response to environmental stresses such as wounding, pathogen attack and oxidative stress. These functions might be dependent on each isozyme/isoform in each plant tissue. This Armoracia rusticana (Horseradish) protein is Peroxidase A2 (HRPA2).